We begin with the raw amino-acid sequence, 513 residues long: ATP synthase subunit alpha (513 aa).

169–176 (GDRQTGKT) lines the ATP pocket.

Belongs to the ATPase alpha/beta chains family. F-type ATPases have 2 components, CF(1) - the catalytic core - and CF(0) - the membrane proton channel. CF(1) has five subunits: alpha(3), beta(3), gamma(1), delta(1), epsilon(1). CF(0) has three main subunits: a(1), b(2) and c(9-12). The alpha and beta chains form an alternating ring which encloses part of the gamma chain. CF(1) is attached to CF(0) by a central stalk formed by the gamma and epsilon chains, while a peripheral stalk is formed by the delta and b chains.

It localises to the cell inner membrane. It catalyses the reaction ATP + H2O + 4 H(+)(in) = ADP + phosphate + 5 H(+)(out). Its function is as follows. Produces ATP from ADP in the presence of a proton gradient across the membrane. The alpha chain is a regulatory subunit. The chain is ATP synthase subunit alpha from Haemophilus influenzae (strain PittEE).